The sequence spans 111 residues: MSEQAVENTVLDRFECRSCGYVYEPEKGDNKHDIAPETPFAELPINWRCPVCTAKKAAFTNIGPAGTASGFRENLGYGLGVNKLTPAQKNILIFGALALGFLFFISLYGLQ.

In terms of domain architecture, Rubredoxin-like spans 11 to 62 (LDRFECRSCGYVYEPEKGDNKHDIAPETPFAELPINWRCPVCTAKKAAFTNI). Positions 16, 19, 49, and 52 each coordinate Fe cation.

It belongs to the rubredoxin family. Fe(3+) serves as cofactor.

Rubredoxin is a small nonheme, iron protein lacking acid-labile sulfide. Its single Fe, chelated to 4 Cys, functions as an electron acceptor and may also stabilize the conformation of the molecule. Could be involved in hydrogenase-linked redox processes. The sequence is that of Rubredoxin (rub) from Nostoc sp. (strain PCC 7120 / SAG 25.82 / UTEX 2576).